Here is a 424-residue protein sequence, read N- to C-terminus: Elongation factor 1-alpha (424 aa).

One can recognise a tr-type G domain in the interval 5–223 (KPHLNLAFIG…NALKEPQKPV (219 aa)). The G1 stretch occupies residues 14-21 (GHVDHGKS). 14–21 (GHVDHGKS) serves as a coordination point for GTP. Ser-21 contributes to the Mg(2+) binding site. Positions 70–74 (GVTID) are G2. Residues 91–94 (DCPG) are G3. GTP-binding positions include 91 to 95 (DCPGH) and 146 to 149 (NKMD). A G4 region spans residues 146 to 149 (NKMD). The interval 187–189 (SAY) is G5.

This sequence belongs to the TRAFAC class translation factor GTPase superfamily. Classic translation factor GTPase family. EF-Tu/EF-1A subfamily.

It localises to the cytoplasm. The catalysed reaction is GTP + H2O = GDP + phosphate + H(+). Functionally, GTP hydrolase that promotes the GTP-dependent binding of aminoacyl-tRNA to the A-site of ribosomes during protein biosynthesis. This is Elongation factor 1-alpha from Methanothrix thermoacetophila (strain DSM 6194 / JCM 14653 / NBRC 101360 / PT) (Methanosaeta thermophila).